A 115-amino-acid polypeptide reads, in one-letter code: ATP synthase subunits region ORF 7 (115 aa).

In Fuscovulum blasticum (Rhodobacter blasticus), this protein is ATP synthase subunits region ORF 7.